The sequence spans 425 residues: Histidine--tRNA ligase (425 aa).

This sequence belongs to the class-II aminoacyl-tRNA synthetase family. Homodimer.

The protein localises to the cytoplasm. The catalysed reaction is tRNA(His) + L-histidine + ATP = L-histidyl-tRNA(His) + AMP + diphosphate + H(+). This is Histidine--tRNA ligase from Tolumonas auensis (strain DSM 9187 / NBRC 110442 / TA 4).